We begin with the raw amino-acid sequence, 384 residues long: Polar flagellin C (384 aa).

A coiled-coil region spans residues 317–347 (AKQNRLSHSINNLANIQENVDASNSRIKDTD).

It belongs to the bacterial flagellin family. Heteromer of multiple flagellin subunits including FlaA, FlaB/D, FlaC, FlaE and FlaF. Homomer of FlaC is not able to form a functional filament.

Its subcellular location is the secreted. The protein localises to the bacterial flagellum. Flagellin is the subunit protein which polymerizes to form the filaments of bacterial flagella. FlaC is not essential for polar flagellar synthesis and swimming motility. Homomer of FlaC is not able to form a functional filament. The chain is Polar flagellin C (flaC) from Vibrio parahaemolyticus serotype O3:K6 (strain RIMD 2210633).